Here is a 64-residue protein sequence, read N- to C-terminus: Large ribosomal subunit protein bL35 (64 aa).

Basic residues predominate over residues 1-44 (MSKIKSHSGAAKRFKRTANGFKHKQSHTSHILTKKSTKRKRHLR). The tract at residues 1–48 (MSKIKSHSGAAKRFKRTANGFKHKQSHTSHILTKKSTKRKRHLRSMNQ) is disordered.

Belongs to the bacterial ribosomal protein bL35 family.

This chain is Large ribosomal subunit protein bL35, found in Marinomonas sp. (strain MWYL1).